The primary structure comprises 455 residues: Bifunctional protein GlmU (455 aa).

Positions 1–226 are pyrophosphorylase; the sequence is MSLDIVILAA…AMEVQGANDR (226 aa). Residues 8 to 11, Lys-22, Gln-73, 78 to 79, 99 to 101, Gly-136, Glu-151, Asn-166, and Asn-224 contribute to the UDP-N-acetyl-alpha-D-glucosamine site; these read LAAG, GT, and YGD. Position 101 (Asp-101) interacts with Mg(2+). Residue Asn-224 coordinates Mg(2+). Positions 227 to 247 are linker; it reads KQLSELERHYQLREARRLMAA. Positions 248–455 are N-acetyltransferase; that stretch reads GVTLRDPSRF…WKRPVKITKD (208 aa). Arg-330 and Lys-348 together coordinate UDP-N-acetyl-alpha-D-glucosamine. The active-site Proton acceptor is His-360. Residues Tyr-363 and Asn-374 each contribute to the UDP-N-acetyl-alpha-D-glucosamine site. Acetyl-CoA contacts are provided by residues Ala-377, 383 to 384, Ser-402, Ala-420, and Arg-437; that span reads NY.

In the N-terminal section; belongs to the N-acetylglucosamine-1-phosphate uridyltransferase family. It in the C-terminal section; belongs to the transferase hexapeptide repeat family. As to quaternary structure, homotrimer. The cofactor is Mg(2+).

It is found in the cytoplasm. The enzyme catalyses alpha-D-glucosamine 1-phosphate + acetyl-CoA = N-acetyl-alpha-D-glucosamine 1-phosphate + CoA + H(+). It catalyses the reaction N-acetyl-alpha-D-glucosamine 1-phosphate + UTP + H(+) = UDP-N-acetyl-alpha-D-glucosamine + diphosphate. Its pathway is nucleotide-sugar biosynthesis; UDP-N-acetyl-alpha-D-glucosamine biosynthesis; N-acetyl-alpha-D-glucosamine 1-phosphate from alpha-D-glucosamine 6-phosphate (route II): step 2/2. The protein operates within nucleotide-sugar biosynthesis; UDP-N-acetyl-alpha-D-glucosamine biosynthesis; UDP-N-acetyl-alpha-D-glucosamine from N-acetyl-alpha-D-glucosamine 1-phosphate: step 1/1. It functions in the pathway bacterial outer membrane biogenesis; LPS lipid A biosynthesis. Catalyzes the last two sequential reactions in the de novo biosynthetic pathway for UDP-N-acetylglucosamine (UDP-GlcNAc). The C-terminal domain catalyzes the transfer of acetyl group from acetyl coenzyme A to glucosamine-1-phosphate (GlcN-1-P) to produce N-acetylglucosamine-1-phosphate (GlcNAc-1-P), which is converted into UDP-GlcNAc by the transfer of uridine 5-monophosphate (from uridine 5-triphosphate), a reaction catalyzed by the N-terminal domain. In Pseudomonas syringae pv. tomato (strain ATCC BAA-871 / DC3000), this protein is Bifunctional protein GlmU.